A 617-amino-acid polypeptide reads, in one-letter code: V-type proton ATPase catalytic subunit A (617 aa).

Residue glycine 257 to threonine 264 participates in ATP binding.

This sequence belongs to the ATPase alpha/beta chains family. As to quaternary structure, V-ATPase is a heteromultimeric enzyme composed of a peripheral catalytic V1 complex (components A to H) attached to an integral membrane V0 proton pore complex (components: a, c, c', c'', d, e, f and VOA1).

It is found in the vacuole membrane. It carries out the reaction ATP + H2O + 4 H(+)(in) = ADP + phosphate + 5 H(+)(out). In terms of biological role, catalytic subunit of the V1 complex of vacuolar(H+)-ATPase (V-ATPase), a multisubunit enzyme composed of a peripheral complex (V1) that hydrolyzes ATP and a membrane integral complex (V0) that translocates protons. V-ATPase is responsible for acidifying and maintaining the pH of intracellular compartments. The protein is V-type proton ATPase catalytic subunit A (VMA1) of Eremothecium gossypii (strain ATCC 10895 / CBS 109.51 / FGSC 9923 / NRRL Y-1056) (Yeast).